Here is a 351-residue protein sequence, read N- to C-terminus: MLKNDLFIRALKRQATPRTPIWVMRQAGRYLPEYRAVREKTDFLTLCKTPELACEVTIQPVDLMGVDAAIIFSDILVVNEAMGMNVEIIETKGIKLTPPIRSQADIDKLIDPDIDEKLGYVLDAIRLAKKELNDRVPLIGFSGAAWTLFTYAVEGGGSKNYTWAKKMMYREPKMAHQLLQKISDCISAYLVKQVEAGADAIQIFDSWASALSEDDYREFALPYIKQNVAAVKAAYPEIPVIAFAKDMNTILSDIADCGADAVGLGWNIDIAKARKELNDRVCLQGNMDPTVLYGTPEKIKSEAAKVLKQFGQHNDHSGHVFNLGHGILPDVDPANLKCLVEFVKEESAKYH.

Substrate-binding positions include 25–29, F43, D74, Y151, S206, and H325; that span reads RQAGR.

Belongs to the uroporphyrinogen decarboxylase family. In terms of assembly, homodimer.

It is found in the cytoplasm. The catalysed reaction is uroporphyrinogen III + 4 H(+) = coproporphyrinogen III + 4 CO2. The protein operates within porphyrin-containing compound metabolism; protoporphyrin-IX biosynthesis; coproporphyrinogen-III from 5-aminolevulinate: step 4/4. In terms of biological role, catalyzes the decarboxylation of four acetate groups of uroporphyrinogen-III to yield coproporphyrinogen-III. This Chlorobaculum tepidum (strain ATCC 49652 / DSM 12025 / NBRC 103806 / TLS) (Chlorobium tepidum) protein is Uroporphyrinogen decarboxylase.